Reading from the N-terminus, the 105-residue chain is Signal peptidase complex subunit 1 (105 aa).

The Cytoplasmic segment spans residues 1–32 (MDGMIAMLPAPLQKLSSHIDFQGQKVAERTYQ). Residues 33-53 (VILTIAGIIGFLVGFWTQQLS) form a helical membrane-spanning segment. Residues 54–56 (YAM) lie on the Lumenal side of the membrane. A helical transmembrane segment spans residues 57 to 77 (FTVLGASAFTALIILPPWPFL). Over 78-105 (FRKNPIVWHTPAEPQESGDKKKETKKTK) the chain is Cytoplasmic.

This sequence belongs to the SPCS1 family. Component of the signal peptidase complex (SPC) composed of a catalytic subunit sec-11 and three accessory subunits spcs-1, spcs-2 and spcs-3. The complex induces a local thinning of the ER membrane which is used to measure the length of the signal peptide (SP) h-region of protein substrates. This ensures the selectivity of the complex towards h-regions shorter than 18-20 amino acids.

It localises to the endoplasmic reticulum membrane. Component of the signal peptidase complex (SPC) which catalyzes the cleavage of N-terminal signal sequences from nascent proteins as they are translocated into the lumen of the endoplasmic reticulum. Dispensable for SPC enzymatic activity. The sequence is that of Signal peptidase complex subunit 1 from Caenorhabditis elegans.